Consider the following 512-residue polypeptide: Maturase K (512 aa).

Belongs to the intron maturase 2 family. MatK subfamily.

It localises to the plastid. Its subcellular location is the chloroplast. Usually encoded in the trnK tRNA gene intron. Probably assists in splicing its own and other chloroplast group II introns. The sequence is that of Maturase K from Oenothera biennis (German evening primrose).